Reading from the N-terminus, the 549-residue chain is MSMFCYQCQETAGCKGCTSRGVCGKTSDVANLQDLLIYVVKGISIYDLKAEEAGIKNNEVNKFIMDALFSTITNANFSREDFIARIKDAIGLRDSIKDELVKNNVQIDDIKDDCALWKGISVEEFEAKAATVGILATENEDVRSLRELLTYGIKGMAAYAHHAYNLGYENEEIYTFMKKALVSTRNALSVDEMIGIVLECGKFGVDVMALLDKANTETYGNPEITKVNIGVRNNPAILISGHDLKDMEELLKQTEGTGVDVYTHSEMLAANYYPEFKKYDHFVGNYGNAWWKQNEEFKSFNGPILMTTNCLVPPKESYKDRVYTTGAVAFEGLKHIEDRKDGKAKDFSEIIEHAKRCASPMEIEKGEIVGGFAHNAVLSLADKIVDAVKTGAIRRFFVMAGCDGRAKSRNYYSDFAKALPKDTVILTAGCAKYKYNKLDLGDIGGIPRVLDAGQCNDSYSLAVIALKLKEVFELQDINELPISFNISWYEQKAVIVLLALLHLGVKNIHLGPTLPAFLSPNVAKVLVENFGIAGIGTVEDDIKLFLGEA.

Positions 5, 8, 17, and 23 each coordinate [4Fe-4S] cluster. Hybrid [4Fe-2O-2S] cluster is bound by residues His242, Glu266, Cys310, Cys402, Cys430, Cys455, Glu490, and Lys492. Position 402 is a cysteine persulfide (Cys402).

It belongs to the HCP family. [4Fe-4S] cluster serves as cofactor. Requires hybrid [4Fe-2O-2S] cluster as cofactor.

It is found in the cytoplasm. The catalysed reaction is A + NH4(+) + H2O = hydroxylamine + AH2 + H(+). Functionally, catalyzes the reduction of hydroxylamine to form NH(3) and H(2)O. This chain is Hydroxylamine reductase, found in Clostridium novyi (strain NT).